Here is a 174-residue protein sequence, read N- to C-terminus: RxLR effector protein 207 (174 aa).

The first 20 residues, 1-20 (MSKVFLLLVLSVFALVSCDA), serve as a signal peptide directing secretion. The RxLR-dEER signature appears at 46 to 62 (RMLRAQEEPTNAADEER). The tract at residues 82–99 (VTNSKLVQSMNNKLASLT) is disordered.

It belongs to the RxLR effector family. As to quaternary structure, interacts with Nicotiana benthamiana ACD11, BPA1 (binding partner of ACD11), as well as BPA-like proteins BPL1, BPL2, BPL3 and BPL4.

Its subcellular location is the secreted. It is found in the host cell membrane. Its function is as follows. Secreted effector that activates ROS-mediated cell death in plant host and is essential for virulence. Plays a role in the transition from the biotrophic to necrotrophic stage. Associates with and promotes the degradation of Nicotiana benthamiana BPA1, BPL1, BPL2, and BPL4 to disrupt ACD11 stabilization in a 26S proteasome-dependent manner. This chain is RxLR effector protein 207, found in Phytophthora capsici.